A 262-amino-acid polypeptide reads, in one-letter code: Shikimate dehydrogenase (NADP(+)) (262 aa).

Residues 14–16 (SAS) and T60 each bind shikimate. K64 acts as the Proton acceptor in catalysis. The shikimate site is built by N85 and D100. NADP(+) is bound by residues 121 to 125 (GAGGA), 145 to 150 (NRTAER), and F203. Y205 contributes to the shikimate binding site. G227 contributes to the NADP(+) binding site.

It belongs to the shikimate dehydrogenase family. Homodimer.

The enzyme catalyses shikimate + NADP(+) = 3-dehydroshikimate + NADPH + H(+). It functions in the pathway metabolic intermediate biosynthesis; chorismate biosynthesis; chorismate from D-erythrose 4-phosphate and phosphoenolpyruvate: step 4/7. Functionally, involved in the biosynthesis of the chorismate, which leads to the biosynthesis of aromatic amino acids. Catalyzes the reversible NADPH linked reduction of 3-dehydroshikimate (DHSA) to yield shikimate (SA). This is Shikimate dehydrogenase (NADP(+)) from Pyrobaculum aerophilum (strain ATCC 51768 / DSM 7523 / JCM 9630 / CIP 104966 / NBRC 100827 / IM2).